Reading from the N-terminus, the 1011-residue chain is Ankyrin repeat domain-containing protein 18B (1011 aa).

5 ANK repeats span residues 67–96 (KDRT…QINI), 100–129 (LNRT…NPNI), 133–162 (YGNT…NIEA), 166–195 (EGNT…NIHA), and 199–228 (FKRT…HISS). 2 disordered regions span residues 264-330 (LRND…GKKK) and 533-554 (MHPN…SEER). Coiled-coil stretches lie at residues 277–319 (ENLK…ENKQ), 385–639 (NEEM…ELVD), 692–722 (ISLL…CLEM), and 752–908 (FKKL…EAFA). Residues 280 to 293 (KKRKKRKKLKKRKE) show a composition bias toward basic residues. Basic and acidic residues predominate over residues 294-319 (GAKAEHNLKVASEEKQERLERSENKQ).

In Homo sapiens (Human), this protein is Ankyrin repeat domain-containing protein 18B (ANKRD18B).